Reading from the N-terminus, the 249-residue chain is UDP-N-acetyl-D-mannosaminuronic acid transferase (249 aa).

This sequence belongs to the glycosyltransferase 26 family.

The enzyme catalyses UDP-N-acetyl-alpha-D-mannosaminouronate + N-acetyl-alpha-D-glucosaminyl-di-trans,octa-cis-undecaprenyl diphosphate = beta-D-ManNAcA-(1-&gt;4)-alpha-D-GlcNAc-di-trans,octa-cis-undecaprenyl diphosphate + UDP + H(+). It functions in the pathway bacterial outer membrane biogenesis; enterobacterial common antigen biosynthesis. Its function is as follows. Catalyzes the synthesis of Und-PP-GlcNAc-ManNAcA (Lipid II), the second lipid-linked intermediate involved in enterobacterial common antigen (ECA) synthesis. In Pectobacterium atrosepticum (strain SCRI 1043 / ATCC BAA-672) (Erwinia carotovora subsp. atroseptica), this protein is UDP-N-acetyl-D-mannosaminuronic acid transferase.